The sequence spans 1063 residues: Cation efflux system protein CzcA (1063 aa).

Transmembrane regions (helical) follow at residues 14–29 (WLVLLAVFGMAGLGIF), 350–370 (GAVLVIVILFLFLGNIRAALI), 452–472 (LIFGQLIIMIVYLPIFALTGV), 487–507 (ALLGAMILSVTFVPAAVALFI), 534–554 (LANTAVVLTFAAVSIVLCVAI), 883–903 (VVVPVALLLVFVLLFAMFNNI), 906–926 (GLLVFTGIPFALTGGILALWI), 937–957 (VGFIALCGVAVLNGLVMLSFI), 982–1004 (VLMTALVASLGFVPMAIATGTGA), and 1013–1033 (VVIGGILSSTALTLLVLPVLY). The segment at 1040–1063 (DEDAEDTREPVTQTHQPDQGRQPA) is disordered. Positions 1049–1063 (PVTQTHQPDQGRQPA) are enriched in polar residues.

It belongs to the resistance-nodulation-cell division (RND) (TC 2.A.6) family.

It localises to the cell membrane. Functionally, has a low cation transport activity for cobalt, it is essential for the expression of cobalt, zinc, and cadmium resistance. CzcA and CzcB together would act in zinc efflux nearly as effectively as the complete CZC efflux system (CzcABC). This Alcaligenes sp. (strain CT14) protein is Cation efflux system protein CzcA (czcA).